Consider the following 1749-residue polypeptide: MQLKHLRTLLSPQDGAAKVTCMAWSQNNAKFAVCTVDRVVLLYDEHGERRDKFSTKPADMKYGRKSYMVKGMAFSPDSTKIAIGQTDNIIYVYKIGEDWGDKKVICNKFIQTSAVTCLQWPAEYIIVFGLAEGKVRLANTKTNKSSTIYGTDSYVVALTTNCSGKGILSGHADGTIVRYFFDDEGSGESQGKLVNHPCPPYALAWATNSIVAAGCDRRIVAYGKEGHVLQTFDYSRDPQEREFTTAAASPGGQSVVLGSYDRLRVFNWSPRRSIWEEAKPKEIANLYTVTALAWKRDGSRLCAGTLCGGVEQFDCCLRRSIYKNKFELTYVGPSQLIVKNLSSGTRVVLKSHYGYEVEEVKILGKERYLVAHTSDTLLLGDLNTNRLSEIPWQGSGGNEKYFFENENVCMIFNAGELTLVEYGSNDSLGSVRTEFMNPHLISVRINERCQRGMEDNKKLAYLVDIKTIAIVDLIGGYNIGTISHESRVDWLELNETGHKLLFRDRKLRLHLYDIESCSKTMILNFCSYVQWVPGSDVLVAQNRNSLCVWYNIEAPERVTMSSIRGDVVGLERGGGKTEVMVTEGVTTVAYTLDEGLIEFGTAIDDGNYTRATAFLETLEMTPETEAMWKTLSKLALEARQLHTAERCFSALGHVAKARFLHETNEIADQVSREYGGEGTDFYQVRARLAMLEKNYKLAEMIFLEQNAVEEAMDMYQELHRWDECIAVAEAKGHPALEKLRRDYYQRLMDTQQEERAGELQESQGDGLAAISLYLKAGLPAKAARLVLTREELLANTELVEHITTALIKGELYERAGDLFEKIRNPQRALECYCKGNAFMKAVELARLAFPVEVVRLEEAWGDHLVQQKQLDAAINHYIEARCSIKAIEAALGARQWKKAIYILDLQDRNTASKYYPRVAQHYASLQEYEIAEELYTKGDRTKDAIDMYTQAGRWEQAHKLAMKCMRPEDVSVLYITQAQEMEKQGKYREAERLYVTVEEPDLAITMFKKHKLYDDMIRLVGKHHPDLLSDTHLHLGKELETEGRLQEAEYHYLEAQEWKATVNMYRSSGLWEEAYRVAKAHGGANAHKHVAYLWAKSLGGEAAVRLLNKLGLLEAAIDHAADNCSFEFAFELSRLALKHKTPEIHLRYAMYLEDEGKFEEAEAEFIRAGKPKEAVLMFVHNQDWEAAQRVAEAHDPDSVAEVLVGQARGALEEKDFQKAEGLLLRAQRPGLALNYYKEAGLWSDALRICKDYVPGQLEALQEEYEREATKKGGRGVEGLVEQARQWEQAGEYSRAVDCYLKVRDSGSSGLMEKCWMKAAELSIKFLPPQRSLEVVRVVGPQLIGIGKHSASAELYLNLDLVKEAIDAFIEGEEWNKAKRVAKELDPRYEDYVDQHYKEFLKNQGKVDSLVGVDVVAALDLYVEQGQWDKCIETATKQNYKILHKYVALYATHLIREGGYAQALALYVQHGAPANPQNFNIYKRIFTDMVSSPGTNNAEAYHSWADLRDVLFNLCENLVKSSEANSAAHEEFEMMLLIAHYYATRSAAQSIKQLETVAARLSVSLLRHTQLLPADKAFYEAGTAAKEVGWENMAFIFFNRFLDLTDAIEEGTLDALDHSDFQDTDIPFEVPLPAKQHVPEAQREEVRDWVLTVSMDQRLEQVLPRDERGVYEASLVAASTGVRALPCLITGYPILRNKIEFKRPGKAANKDNWNKFLMAIKTSHSPVCQDVLKFISQWCGGLPSTSFSFQ.

N-acetylmethionine is present on methionine 1. Residue lysine 4 forms a Glycyl lysine isopeptide (Lys-Gly) (interchain with G-Cter in SUMO1) linkage. WD repeat units follow at residues 14-53 (DGAA…RDKF), 64-103 (RKSY…GDKK), 110-148 (IQTS…SSTI), 150-191 (GTDS…ESQG), 195-233 (NHPC…QTFD), 238-278 (PQER…WEEA), 284-323 (ANLY…SIYK), 483-520 (SHES…CSKT), and 521-559 (MILN…ERVT). The stretch at 593-624 (DEGLIEFGTAIDDGNYTRATAFLETLEMTPET) is one TPR 1 repeat. Arginine 672 is subject to Omega-N-methylarginine. TPR repeat units follow at residues 692–725 (EKNY…DECI), 809–842 (GELY…MKAV), 854–887 (VRLE…IKAI), 912–945 (SKYY…KDAI), 947–970 (MYTQ…PEDV), 971–1004 (SVLY…DLAI), 1042–1075 (EGRL…EEAY), 1142–1175 (PEIH…KEAV), 1276–1309 (VEGL…GSSG), 1345–1378 (IGKH…NKAK), 1411–1445 (GVDV…LHKY), 1447–1477 (ALYA…NPQN), and 1574–1607 (DKAF…TDAI).

The protein belongs to the IFT172 family. As to quaternary structure, interacts with IFT88. Interacts with IFT57. Interacts with RABL2/RABL2A; binds preferentially to GDP-bound RABL2. May interact with LHX3 and LHX4; the relevance of such interaction is however unclear in vivo. As to expression, highly expressed in the testis and pituitary cells.

The protein resides in the cell projection. It localises to the cilium. It is found in the nucleus. Functionally, required for the maintenance and formation of cilia. Plays an indirect role in hedgehog (Hh) signaling, cilia being required for all activity of the hedgehog pathway. The protein is Intraflagellar transport protein 172 homolog (Ift172) of Rattus norvegicus (Rat).